The following is a 223-amino-acid chain: Deoxyribose-phosphate aldolase (223 aa).

The active-site Proton donor/acceptor is the aspartate 91. The active-site Schiff-base intermediate with acetaldehyde is the lysine 153. Lysine 182 serves as the catalytic Proton donor/acceptor.

This sequence belongs to the DeoC/FbaB aldolase family. DeoC type 1 subfamily.

It is found in the cytoplasm. The catalysed reaction is 2-deoxy-D-ribose 5-phosphate = D-glyceraldehyde 3-phosphate + acetaldehyde. The protein operates within carbohydrate degradation; 2-deoxy-D-ribose 1-phosphate degradation; D-glyceraldehyde 3-phosphate and acetaldehyde from 2-deoxy-alpha-D-ribose 1-phosphate: step 2/2. Functionally, catalyzes a reversible aldol reaction between acetaldehyde and D-glyceraldehyde 3-phosphate to generate 2-deoxy-D-ribose 5-phosphate. The polypeptide is Deoxyribose-phosphate aldolase (Streptococcus pyogenes serotype M28 (strain MGAS6180)).